The chain runs to 373 residues: Peroxisomal biogenesis factor 3 (373 aa).

Residues 1–15 lie on the Cytoplasmic side of the membrane; that stretch reads MFRSTWNFLKRHKKK. Residues 1 to 45 form a targeting to peroxisomes region; the sequence is MFRSTWNFLKRHKKKCIFLGTVLGGVYILGKYGQKKIREIQEREA. A helical transmembrane segment spans residues 16-36; it reads CIFLGTVLGGVYILGKYGQKK. Residues 37-116 lie on the Peroxisomal side of the membrane; the sequence is IREIQEREAA…LKIISFTRSI (80 aa). The chain crosses the membrane as a helical span at residues 117 to 140; sequence VAVYSTCMLVVLLRVQLNIIGGYI. Positions 120 to 136 are interaction with PEX19; that stretch reads YSTCMLVVLLRVQLNII. At 141-373 the chain is on the cytoplasmic side; sequence YLDNAAVGKN…AFSTPQQLEK (233 aa).

It belongs to the peroxin-3 family. Interacts with PEX19.

The protein localises to the peroxisome membrane. Functionally, involved in peroxisome biosynthesis and integrity. Assembles membrane vesicles before the matrix proteins are translocated. As a docking factor for PEX19, is necessary for the import of peroxisomal membrane proteins in the peroxisomes. This chain is Peroxisomal biogenesis factor 3 (PEX3), found in Bos taurus (Bovine).